Here is a 163-residue protein sequence, read N- to C-terminus: Epididymal-specific lipocalin-6 (163 aa).

An N-terminal signal peptide occupies residues 1–20; the sequence is MGGLLLAAFLALVSVPRAQA.

This sequence belongs to the calycin superfamily. Lipocalin family. As to expression, predominantly expressed in epididymis.

The protein resides in the secreted. Functionally, may play a role in male fertility. This Homo sapiens (Human) protein is Epididymal-specific lipocalin-6 (LCN6).